Reading from the N-terminus, the 98-residue chain is Putative pterin-4-alpha-carbinolamine dehydratase (98 aa).

The protein belongs to the pterin-4-alpha-carbinolamine dehydratase family.

It catalyses the reaction (4aS,6R)-4a-hydroxy-L-erythro-5,6,7,8-tetrahydrobiopterin = (6R)-L-erythro-6,7-dihydrobiopterin + H2O. This chain is Putative pterin-4-alpha-carbinolamine dehydratase, found in Roseobacter denitrificans (strain ATCC 33942 / OCh 114) (Erythrobacter sp. (strain OCh 114)).